A 668-amino-acid chain; its full sequence is Probable ATP-dependent RNA helicase ddx52 (668 aa).

The disordered stretch occupies residues 37-174; sequence KQTKTNNKVH…TQEDKHKREI (138 aa). A compositionally biased stretch (polar residues) spans 40-57; it reads KTNNKVHFFKNTTPSTPV. The segment covering 59–69 has biased composition (basic and acidic residues); the sequence is SKKDNIKQKKE. Over residues 70–108 the composition is skewed to acidic residues; the sequence is EEEDNDNDNEESKEDDDFVEDDDNDDDDDDDDEDEENEE. A compositionally biased stretch (basic and acidic residues) spans 109–120; sequence PKEKEFIKHQVN. Over residues 138–147 the composition is skewed to acidic residues; sequence ENSDDSDDSD. A compositionally biased stretch (basic and acidic residues) spans 161 to 174; that stretch reads VSKETQEDKHKREI. Positions 199 to 227 match the Q motif motif; the sequence is QLENRFKVRKYLLNNINEIGYKEPSPIQM. Positions 230-402 constitute a Helicase ATP-binding domain; that stretch reads IPILLKEREV…HSIMKNPIKI (173 aa). 243-250 provides a ligand contact to ATP; it reads APTGSGKT. The DEAD box motif lies at 349 to 352; it reads DEAD. The Helicase C-terminal domain occupies 413–574; it reads TVDQKLIYVG…HVPDWMLNLK (162 aa). The disordered stretch occupies residues 601–668; it reads RTSSKFKLRK…KQIKKPKKII (68 aa). Positions 604-613 are enriched in basic residues; it reads SKFKLRKNKK. A compositionally biased stretch (low complexity) spans 624-636; sequence SNENNNNNNNNNN. Residues 659 to 668 are compositionally biased toward basic residues; the sequence is KQIKKPKKII.

It belongs to the DEAD box helicase family. DDX52/ROK1 subfamily.

Its subcellular location is the nucleus. The protein localises to the nucleolus. It catalyses the reaction ATP + H2O = ADP + phosphate + H(+). ATP-binding RNA helicase which may be involved in the ribosome biogenesis. In Dictyostelium discoideum (Social amoeba), this protein is Probable ATP-dependent RNA helicase ddx52 (ddx52).